Here is a 273-residue protein sequence, read N- to C-terminus: Ribonuclease PH (273 aa).

Phosphate-binding positions include R86 and 124 to 126; that span reads GTR. The tract at residues 254–273 is disordered; the sequence is GHQEPGEGAGVSLAPGGGGL.

Belongs to the RNase PH family. In terms of assembly, homohexameric ring arranged as a trimer of dimers.

The enzyme catalyses tRNA(n+1) + phosphate = tRNA(n) + a ribonucleoside 5'-diphosphate. Its function is as follows. Phosphorolytic 3'-5' exoribonuclease that plays an important role in tRNA 3'-end maturation. Removes nucleotide residues following the 3'-CCA terminus of tRNAs; can also add nucleotides to the ends of RNA molecules by using nucleoside diphosphates as substrates, but this may not be physiologically important. Probably plays a role in initiation of 16S rRNA degradation (leading to ribosome degradation) during starvation. The chain is Ribonuclease PH from Symbiobacterium thermophilum (strain DSM 24528 / JCM 14929 / IAM 14863 / T).